A 702-amino-acid chain; its full sequence is Elongation factor G (702 aa).

One can recognise a tr-type G domain in the interval 8–290; that stretch reads ERYRNIGISA…AVIDYLPSPV (283 aa). GTP-binding positions include 17–24, 88–92, and 142–145; these read AHIDAGKT, DTPGH, and NKMD.

Belongs to the TRAFAC class translation factor GTPase superfamily. Classic translation factor GTPase family. EF-G/EF-2 subfamily.

The protein resides in the cytoplasm. Its function is as follows. Catalyzes the GTP-dependent ribosomal translocation step during translation elongation. During this step, the ribosome changes from the pre-translocational (PRE) to the post-translocational (POST) state as the newly formed A-site-bound peptidyl-tRNA and P-site-bound deacylated tRNA move to the P and E sites, respectively. Catalyzes the coordinated movement of the two tRNA molecules, the mRNA and conformational changes in the ribosome. The protein is Elongation factor G of Acidovorax ebreus (strain TPSY) (Diaphorobacter sp. (strain TPSY)).